Here is a 412-residue protein sequence, read N- to C-terminus: Serine hydroxymethyltransferase (412 aa).

(6S)-5,6,7,8-tetrahydrofolate-binding positions include Leu-117 and 121–123; that span reads GHL. Lys-226 is subject to N6-(pyridoxal phosphate)lysine. Residue 349–351 coordinates (6S)-5,6,7,8-tetrahydrofolate; it reads SPF.

It belongs to the SHMT family. Homodimer. Pyridoxal 5'-phosphate serves as cofactor.

Its subcellular location is the cytoplasm. It catalyses the reaction (6R)-5,10-methylene-5,6,7,8-tetrahydrofolate + glycine + H2O = (6S)-5,6,7,8-tetrahydrofolate + L-serine. The protein operates within one-carbon metabolism; tetrahydrofolate interconversion. Its pathway is amino-acid biosynthesis; glycine biosynthesis; glycine from L-serine: step 1/1. Catalyzes the reversible interconversion of serine and glycine with tetrahydrofolate (THF) serving as the one-carbon carrier. This reaction serves as the major source of one-carbon groups required for the biosynthesis of purines, thymidylate, methionine, and other important biomolecules. Also exhibits THF-independent aldolase activity toward beta-hydroxyamino acids, producing glycine and aldehydes, via a retro-aldol mechanism. This is Serine hydroxymethyltransferase from Geobacillus thermodenitrificans (strain NG80-2).